A 201-amino-acid chain; its full sequence is LexA repressor (201 aa).

The H-T-H motif DNA-binding region spans 28–48 (LREIAAQLGISGTLGVMKHLE). Catalysis depends on for autocatalytic cleavage activity residues S120 and K157.

The protein belongs to the peptidase S24 family. Homodimer.

The catalysed reaction is Hydrolysis of Ala-|-Gly bond in repressor LexA.. Its function is as follows. Represses a number of genes involved in the response to DNA damage (SOS response), including recA and lexA. In the presence of single-stranded DNA, RecA interacts with LexA causing an autocatalytic cleavage which disrupts the DNA-binding part of LexA, leading to derepression of the SOS regulon and eventually DNA repair. In Citrifermentans bemidjiense (strain ATCC BAA-1014 / DSM 16622 / JCM 12645 / Bem) (Geobacter bemidjiensis), this protein is LexA repressor.